The sequence spans 173 residues: Gamma-crystallin S-2 (173 aa).

Beta/gamma crystallin 'Greek key' domains are found at residues 2–40 (GKII…RVES) and 41–83 (DWWV…RVPT). The tract at residues 84-88 (HTQRP) is connecting peptide. Beta/gamma crystallin 'Greek key' domains are found at residues 89 to 129 (YRMR…HVMG) and 130 to 172 (AYWI…RRIM).

Belongs to the beta/gamma-crystallin family.

In terms of biological role, crystallins are the dominant structural components of the vertebrate eye lens. This chain is Gamma-crystallin S-2 (GS-2), found in Chiloscyllium indicum (Slender bamboo shark).